The primary structure comprises 120 residues: uncharacterized protein (120 aa).

In terms of domain architecture, HIT spans 7-120; the sequence is VFAKIITKNL…KLIGLINNND (114 aa). The Histidine triad motif motif lies at 101-105; that stretch reads HFHFH.

This is an uncharacterized protein from Rickettsia prowazekii (strain Madrid E).